Here is a 55-residue protein sequence, read N- to C-terminus: ATP synthase protein 8 (55 aa).

The helical transmembrane segment at 4 to 24 (LDPAPWFSMLTVSWLIIFLLI) threads the bilayer.

The protein belongs to the ATPase protein 8 family. In terms of assembly, F-type ATPases have 2 components, CF(1) - the catalytic core - and CF(0) - the membrane proton channel.

It localises to the mitochondrion membrane. Functionally, mitochondrial membrane ATP synthase (F(1)F(0) ATP synthase or Complex V) produces ATP from ADP in the presence of a proton gradient across the membrane which is generated by electron transport complexes of the respiratory chain. F-type ATPases consist of two structural domains, F(1) - containing the extramembraneous catalytic core and F(0) - containing the membrane proton channel, linked together by a central stalk and a peripheral stalk. During catalysis, ATP synthesis in the catalytic domain of F(1) is coupled via a rotary mechanism of the central stalk subunits to proton translocation. Part of the complex F(0) domain. Minor subunit located with subunit a in the membrane. The chain is ATP synthase protein 8 (MT-ATP8) from Petromyzon marinus (Sea lamprey).